Here is a 494-residue protein sequence, read N- to C-terminus: Cytochrome P450 2A11 (494 aa).

The residue at position 379 (Lys379) is an N6-acetyllysine. Heme is bound at residue Cys439.

It belongs to the cytochrome P450 family. Heme is required as a cofactor. As to expression, expressed in liver and lung as well as in nasal tissues.

The protein resides in the endoplasmic reticulum membrane. It localises to the microsome membrane. The enzyme catalyses an organic molecule + reduced [NADPH--hemoprotein reductase] + O2 = an alcohol + oxidized [NADPH--hemoprotein reductase] + H2O + H(+). Catalyzes the oxygenation of a variety of substrates, including ethanol and procarcinogens such as N-nitrosodiethylamine and phenacetin. Has no or little activity as a coumarin 7-hydroxylase and in the formation of androstenedione from testosterone. This Oryctolagus cuniculus (Rabbit) protein is Cytochrome P450 2A11 (CYP2A11).